A 395-amino-acid polypeptide reads, in one-letter code: HORMA domain-containing protein 1 (395 aa).

Residues Gln-24–Val-226 form the HORMA domain. Residues Asp-329 to Val-395 form a disordered region. A compositionally biased stretch (polar residues) spans Lys-344–Lys-353. Residues Ser-354–Gln-363 show a composition bias toward basic and acidic residues. Ser-377 is subject to Phosphoserine. Residues Lys-384 to Lys-387 carry the Nuclear localization signal motif.

As to quaternary structure, interacts with HORMAD2. Interacts with IHO1. Post-translationally, phosphorylated at Ser-378 in a SPO11-dependent manner.

It localises to the nucleus. Its subcellular location is the chromosome. Plays a key role in meiotic progression. Regulates 3 different functions during meiosis: ensures that sufficient numbers of processed DNA double-strand breaks (DSBs) are available for successful homology search by increasing the steady-state numbers of single-stranded DSB ends. Promotes synaptonemal-complex formation independently of its role in homology search. Plays a key role in the male mid-pachytene checkpoint and the female meiotic prophase checkpoint: required for efficient build-up of ATR activity on unsynapsed chromosome regions, a process believed to form the basis of meiotic silencing of unsynapsed chromatin (MSUC) and meiotic prophase quality control in both sexes. The protein is HORMA domain-containing protein 1 (HORMAD1) of Canis lupus familiaris (Dog).